We begin with the raw amino-acid sequence, 647 residues long: XK-related protein 4 (647 aa).

Basic and acidic residues predominate over residues methionine 1–serine 15. Residues methionine 1–alanine 44 are disordered. Over residues proline 21–valine 31 the composition is skewed to polar residues. 2 consecutive transmembrane segments (helical) span residues tryptophan 112–valine 132 and tryptophan 142–phenylalanine 162. Serine 197 is modified (phosphoserine). Positions serine 197–glycine 238 are disordered. Residues serine 207–threonine 236 show a composition bias toward polar residues. Transmembrane regions (helical) follow at residues cysteine 245–tryptophan 265, histidine 303–valine 323, leucine 328–alanine 348, lysine 362–alanine 382, valine 393–histidine 415, tryptophan 425–valine 445, leucine 454–leucine 474, and phenylalanine 484–leucine 504.

It belongs to the XK family. In terms of assembly, homodimer; homodimerization takes place upon caspase cleavage. Interacts with the processed C-terminus of XRCC4 (protein XRCC4, C-terminus); interaction promotes the phospholipid scramblase activity. In terms of processing, undergoes proteolytic processing by caspase-3 (CASP3), caspase-6 (CASP6) and caspase-7 (CASP7) to generate the XK-related protein 4, processed form, leading to its activation. In terms of tissue distribution, highly expressed in expressed in the brain; weakly expressed in the spleen, thymus, uterus, blood vessels and fetus.

The protein localises to the cell membrane. The catalysed reaction is a 1,2-diacyl-sn-glycero-3-phospho-L-serine(in) = a 1,2-diacyl-sn-glycero-3-phospho-L-serine(out). With respect to regulation, phospholipid scramblase activity is activated upon caspase cleavage to generate the XK-related protein 4, processed form. Does not act prior the onset of apoptosis. Homodimerizes upon caspase cleavage. Phospholipid scramblase activity is activated following interaction with the processed C-terminus of XRCC4 (protein XRCC4, C-terminus). Functionally, phospholipid scramblase that promotes phosphatidylserine exposure on apoptotic cell surface. Phosphatidylserine is a specific marker only present at the surface of apoptotic cells and acts as a specific signal for engulfment. This chain is XK-related protein 4, found in Mus musculus (Mouse).